The chain runs to 325 residues: UPF0285 protein MmarC6_0247 (325 aa).

Belongs to the UPF0285 family.

This is UPF0285 protein MmarC6_0247 from Methanococcus maripaludis (strain C6 / ATCC BAA-1332).